The chain runs to 350 residues: Phosphoribosylformylglycinamidine cyclo-ligase (350 aa).

The protein belongs to the AIR synthase family.

The protein localises to the cytoplasm. The enzyme catalyses 2-formamido-N(1)-(5-O-phospho-beta-D-ribosyl)acetamidine + ATP = 5-amino-1-(5-phospho-beta-D-ribosyl)imidazole + ADP + phosphate + H(+). It functions in the pathway purine metabolism; IMP biosynthesis via de novo pathway; 5-amino-1-(5-phospho-D-ribosyl)imidazole from N(2)-formyl-N(1)-(5-phospho-D-ribosyl)glycinamide: step 2/2. The polypeptide is Phosphoribosylformylglycinamidine cyclo-ligase (Cupriavidus pinatubonensis (strain JMP 134 / LMG 1197) (Cupriavidus necator (strain JMP 134))).